The primary structure comprises 353 residues: Photosystem II D2 protein (353 aa).

Thr-2 carries the post-translational modification N-acetylthreonine. The residue at position 2 (Thr-2) is a Phosphothreonine. Residues 41–61 traverse the membrane as a helical segment; it reads CAYFAVGGWFTGTTFVTSWYT. His-118 is a chlorophyll a binding site. A helical transmembrane segment spans residues 125 to 141; it reads GFMLRQFELARSVQLRP. Positions 130 and 143 each coordinate pheophytin a. A helical membrane pass occupies residues 153-166; the sequence is VFVSVFLIYPLGQS. Position 198 (His-198) interacts with chlorophyll a. A helical transmembrane segment spans residues 208 to 228; the sequence is AALLCAIHGATVENTLFEDGD. Residues His-215 and Phe-262 each contribute to the a plastoquinone site. Residue His-215 participates in Fe cation binding. Residue His-269 coordinates Fe cation. The helical transmembrane segment at 279 to 295 threads the bilayer; sequence GLWMSALGVVGLALNLR.

It belongs to the reaction center PufL/M/PsbA/D family. In terms of assembly, PSII is composed of 1 copy each of membrane proteins PsbA, PsbB, PsbC, PsbD, PsbE, PsbF, PsbH, PsbI, PsbJ, PsbK, PsbL, PsbM, PsbT, PsbX, PsbY, PsbZ, Psb30/Ycf12, at least 3 peripheral proteins of the oxygen-evolving complex and a large number of cofactors. It forms dimeric complexes. The cofactor is The D1/D2 heterodimer binds P680, chlorophylls that are the primary electron donor of PSII, and subsequent electron acceptors. It shares a non-heme iron and each subunit binds pheophytin, quinone, additional chlorophylls, carotenoids and lipids. There is also a Cl(-1) ion associated with D1 and D2, which is required for oxygen evolution. The PSII complex binds additional chlorophylls, carotenoids and specific lipids..

It localises to the plastid. The protein resides in the chloroplast thylakoid membrane. It catalyses the reaction 2 a plastoquinone + 4 hnu + 2 H2O = 2 a plastoquinol + O2. Photosystem II (PSII) is a light-driven water:plastoquinone oxidoreductase that uses light energy to abstract electrons from H(2)O, generating O(2) and a proton gradient subsequently used for ATP formation. It consists of a core antenna complex that captures photons, and an electron transfer chain that converts photonic excitation into a charge separation. The D1/D2 (PsbA/PsbD) reaction center heterodimer binds P680, the primary electron donor of PSII as well as several subsequent electron acceptors. D2 is needed for assembly of a stable PSII complex. This chain is Photosystem II D2 protein, found in Cicer arietinum (Chickpea).